The following is a 304-amino-acid chain: UDP-3-O-acyl-N-acetylglucosamine deacetylase (304 aa).

Zn(2+)-binding residues include H78, H237, and D241. H264 (proton donor) is an active-site residue.

It belongs to the LpxC family. Zn(2+) serves as cofactor.

The enzyme catalyses a UDP-3-O-[(3R)-3-hydroxyacyl]-N-acetyl-alpha-D-glucosamine + H2O = a UDP-3-O-[(3R)-3-hydroxyacyl]-alpha-D-glucosamine + acetate. It participates in glycolipid biosynthesis; lipid IV(A) biosynthesis; lipid IV(A) from (3R)-3-hydroxytetradecanoyl-[acyl-carrier-protein] and UDP-N-acetyl-alpha-D-glucosamine: step 2/6. Functionally, catalyzes the hydrolysis of UDP-3-O-myristoyl-N-acetylglucosamine to form UDP-3-O-myristoylglucosamine and acetate, the committed step in lipid A biosynthesis. This Nitrosococcus oceani (strain ATCC 19707 / BCRC 17464 / JCM 30415 / NCIMB 11848 / C-107) protein is UDP-3-O-acyl-N-acetylglucosamine deacetylase.